We begin with the raw amino-acid sequence, 104 residues long: MSVQGIDGVLQQMQVKALQASDTPIARPSVEPGFASELKAAIDKISDTQQVARTQAEKFTLGVPGVALNDVMVDLQKSSISMQMGIQVRNKLVSAYQEVMNMSV.

This sequence belongs to the FliE family.

It localises to the bacterial flagellum basal body. The protein is Flagellar hook-basal body complex protein FliE of Pectobacterium atrosepticum (strain SCRI 1043 / ATCC BAA-672) (Erwinia carotovora subsp. atroseptica).